Here is a 321-residue protein sequence, read N- to C-terminus: Methionyl-tRNA formyltransferase (321 aa).

Position 111–114 (111–114) interacts with (6S)-5,6,7,8-tetrahydrofolate; the sequence is SLLP.

Belongs to the Fmt family.

It catalyses the reaction L-methionyl-tRNA(fMet) + (6R)-10-formyltetrahydrofolate = N-formyl-L-methionyl-tRNA(fMet) + (6S)-5,6,7,8-tetrahydrofolate + H(+). Its function is as follows. Attaches a formyl group to the free amino group of methionyl-tRNA(fMet). The formyl group appears to play a dual role in the initiator identity of N-formylmethionyl-tRNA by promoting its recognition by IF2 and preventing the misappropriation of this tRNA by the elongation apparatus. In Bifidobacterium animalis subsp. lactis (strain AD011), this protein is Methionyl-tRNA formyltransferase.